The following is a 294-amino-acid chain: Ribosomal RNA small subunit methyltransferase A (294 aa).

S-adenosyl-L-methionine-binding residues include asparagine 29, valine 31, glycine 56, glutamate 77, aspartate 107, and asparagine 126.

Belongs to the class I-like SAM-binding methyltransferase superfamily. rRNA adenine N(6)-methyltransferase family. RsmA subfamily.

The protein localises to the cytoplasm. The enzyme catalyses adenosine(1518)/adenosine(1519) in 16S rRNA + 4 S-adenosyl-L-methionine = N(6)-dimethyladenosine(1518)/N(6)-dimethyladenosine(1519) in 16S rRNA + 4 S-adenosyl-L-homocysteine + 4 H(+). Specifically dimethylates two adjacent adenosines (A1518 and A1519) in the loop of a conserved hairpin near the 3'-end of 16S rRNA in the 30S particle. May play a critical role in biogenesis of 30S subunits. The chain is Ribosomal RNA small subunit methyltransferase A from Mycobacterium sp. (strain MCS).